The chain runs to 209 residues: Glycolipid transfer protein A (209 aa).

Repeat copies occupy residues 45-55 (IKADITGNITK) and 56-66 (IRSVYESNPTK). Positions 45–66 (IKADITGNITKIRSVYESNPTK) are 2 X 12 AA approximate tandem repeats. Residue 48-55 (DITGNITK) participates in beta-D-galactosyl-(1-&gt;4)-beta-D-glucosyl-(1&lt;-&gt;1)-N-[(9Z)-octadecenoyl]-sphing-4-enine binding. Positions 140 and 207 each coordinate beta-D-galactosyl-(1-&gt;4)-beta-D-glucosyl-(1&lt;-&gt;1)-N-[(9Z)-octadecenoyl]-sphing-4-enine.

The protein belongs to the GLTP family.

It localises to the cytoplasm. In terms of biological role, accelerates the intermembrane transfer of various glycolipids. Catalyzes the transfer of various glycosphingolipids between membranes but does not catalyze the transfer of phospholipids. May be involved in the intracellular translocation of glucosylceramides. The sequence is that of Glycolipid transfer protein A (gltp-a) from Xenopus laevis (African clawed frog).